Reading from the N-terminus, the 204-residue chain is Outer-membrane lipoprotein LolB (204 aa).

The N-terminal stretch at 1–20 is a signal peptide; sequence MLRSRRLALLCLATPLWLAA. The N-palmitoyl cysteine moiety is linked to residue cysteine 21. A lipid anchor (S-diacylglycerol cysteine) is attached at cysteine 21. Positions 131–150 are disordered; sequence GRAAPGTPSNVTRDANGRPD.

Belongs to the LolB family. Monomer.

The protein resides in the cell outer membrane. Its function is as follows. Plays a critical role in the incorporation of lipoproteins in the outer membrane after they are released by the LolA protein. The sequence is that of Outer-membrane lipoprotein LolB from Cupriavidus metallidurans (strain ATCC 43123 / DSM 2839 / NBRC 102507 / CH34) (Ralstonia metallidurans).